The following is a 462-amino-acid chain: L-seryl-tRNA(Sec) selenium transferase (462 aa).

Residue K292 is modified to N6-(pyridoxal phosphate)lysine.

Belongs to the SelA family. Pyridoxal 5'-phosphate serves as cofactor.

It is found in the cytoplasm. The catalysed reaction is L-seryl-tRNA(Sec) + selenophosphate + H(+) = L-selenocysteinyl-tRNA(Sec) + phosphate. It participates in aminoacyl-tRNA biosynthesis; selenocysteinyl-tRNA(Sec) biosynthesis; selenocysteinyl-tRNA(Sec) from L-seryl-tRNA(Sec) (bacterial route): step 1/1. In terms of biological role, converts seryl-tRNA(Sec) to selenocysteinyl-tRNA(Sec) required for selenoprotein biosynthesis. The sequence is that of L-seryl-tRNA(Sec) selenium transferase from Clostridium perfringens (strain 13 / Type A).